Reading from the N-terminus, the 77-residue chain is U8-lycotoxin-Ls1n (77 aa).

The N-terminal stretch at 1-20 (MKLMIFTGLVLFAIVSLIEA) is a signal peptide. A propeptide spanning residues 21-26 (QAENEK) is cleaved from the precursor.

Belongs to the neurotoxin 19 (CSTX) family. 08 (U8-Lctx) subfamily. Contains 4 disulfide bonds. As to expression, expressed by the venom gland.

It localises to the secreted. This chain is U8-lycotoxin-Ls1n, found in Lycosa singoriensis (Wolf spider).